Consider the following 238-residue polypeptide: MNPEQFQMALAEKGIELSDDQMKQFHDYFKMLVEWNEKMNLTAITDEKEVYLKHFYDSISAAFYVDFTKFDTICDVGAGAGFPSLPIKICFPHLKVSIVDSLKKRMTFLDALAEKLGLTDVHFYHDRAETFGQNKAHREKYDLVTARAVARMSVLSELCMPLVKKGGSFLVMKAAQAEQELQTAEKAIKLFGGKVEEHFAFALPVEESERNIYVITKTKETPNKYPRKPGTPNKLPIE.

S-adenosyl-L-methionine-binding positions include Gly-77, Phe-82, 128-129 (AE), and Arg-147.

The protein belongs to the methyltransferase superfamily. RNA methyltransferase RsmG family.

Its subcellular location is the cytoplasm. In terms of biological role, specifically methylates the N7 position of guanine in position 535 of 16S rRNA. In Listeria innocua serovar 6a (strain ATCC BAA-680 / CLIP 11262), this protein is Ribosomal RNA small subunit methyltransferase G.